A 537-amino-acid chain; its full sequence is Chaperonin GroEL 1 (537 aa).

ATP-binding positions include 29–32 (TLGP), 86–90 (DGTTT), G413, 478–480 (NAA), and D494.

This sequence belongs to the chaperonin (HSP60) family. As to quaternary structure, forms a cylinder of 14 subunits composed of two heptameric rings stacked back-to-back. Interacts with the co-chaperonin GroES.

It is found in the cytoplasm. It catalyses the reaction ATP + H2O + a folded polypeptide = ADP + phosphate + an unfolded polypeptide.. In terms of biological role, together with its co-chaperonin GroES, plays an essential role in assisting protein folding. The GroEL-GroES system forms a nano-cage that allows encapsulation of the non-native substrate proteins and provides a physical environment optimized to promote and accelerate protein folding. This chain is Chaperonin GroEL 1, found in Corynebacterium efficiens (strain DSM 44549 / YS-314 / AJ 12310 / JCM 11189 / NBRC 100395).